Reading from the N-terminus, the 822-residue chain is Microcephalin (822 aa).

A BRCT 1 domain is found at 10–99 (AFLKDVVAYV…ALVDESLFPA (90 aa)). 3 disordered regions span residues 182-203 (MKEK…SQQN), 219-243 (PLSS…DQER), and 266-295 (SSFY…ESIN). Composition is skewed to polar residues over residues 189–203 (LSPT…SQQN) and 219–235 (PLSS…SSFG). 3 positions are modified to phosphoserine: Ser-273, Ser-290, and Ser-327. Position 329 is a phosphothreonine (Thr-329). Disordered stretches follow at residues 335–366 (EHQV…LKKR), 498–567 (NDSP…SPED), and 594–636 (TGYS…PTRT). The span at 522–541 (HPDTLSSSAHHITPLKGNST) shows a compositional bias: polar residues. 2 stretches are compositionally biased toward basic and acidic residues: residues 542 to 553 (ETRDPGDGKGSP) and 625 to 634 (KKSEKEEKPT). BRCT domains lie at 627–717 (SEKE…PFEL) and 738–820 (YQGT…NYQL).

In terms of assembly, interacts with CDC27 and maybe other components of the APC/C complex. Interacts with histone variant H2AX under DNA damage conditions. As to expression, high levels of expression are found in the developing forebrain and, in particular, in the walls of the lateral ventricles.

The protein resides in the cytoplasm. It localises to the cytoskeleton. It is found in the microtubule organizing center. The protein localises to the centrosome. Its function is as follows. Implicated in chromosome condensation and DNA damage induced cellular responses. May play a role in neurogenesis and regulation of the size of the cerebral cortex. The protein is Microcephalin of Mus musculus (Mouse).